The sequence spans 70 residues: Homeobox protein CDX (70 aa).

Residues 1-60 constitute a DNA-binding region (homeobox); sequence PDKYRVVYTDYQRLELEKEFHYSRYITMNRKAELAKSLDLTERQIKIWFQNRRAKERKIN.

It belongs to the Caudal homeobox family.

It is found in the nucleus. In Lineus sanguineus (Ribbon worm), this protein is Homeobox protein CDX (CDX).